Consider the following 44-residue polypeptide: DNA-directed RNA polymerase subunit Rpo12 (44 aa).

The Zn(2+) site is built by Cys-8, Cys-22, and Cys-25.

It belongs to the archaeal Rpo12/eukaryotic RPC10 RNA polymerase subunit family. As to quaternary structure, part of the RNA polymerase complex. Requires Zn(2+) as cofactor.

The protein resides in the cytoplasm. It carries out the reaction RNA(n) + a ribonucleoside 5'-triphosphate = RNA(n+1) + diphosphate. Its function is as follows. DNA-dependent RNA polymerase (RNAP) catalyzes the transcription of DNA into RNA using the four ribonucleoside triphosphates as substrates. In Natronomonas pharaonis (strain ATCC 35678 / DSM 2160 / CIP 103997 / JCM 8858 / NBRC 14720 / NCIMB 2260 / Gabara) (Halobacterium pharaonis), this protein is DNA-directed RNA polymerase subunit Rpo12.